Reading from the N-terminus, the 231-residue chain is PIAGSMVLAAILLKLGGYGIIRMMQILPTTKTDMFLPFVVLALWGAILANLTCLQQTDLKSLIAYSSISHMGLVVAAIIIQTPWGLSGAMALMIAHGFTSSALFCLANTTYERTHTRILILTRGLHNILPMATTWWLLTNLMNIAVPPTMNFTGELLIMSALFNWCPTTIIMLGLSMLITASYSLHMFLSTQMGPTLLNNQTEPTHSREHLLMILHLIPLMMISMKPELVI.

6 helical membrane passes run 1 to 21 (PIAGSMVLAAILLKLGGYGII), 34 to 54 (MFLPFVVLALWGAILANLTCL), 63 to 85 (IAYSSISHMGLVVAAIIIQTPWG), 89 to 111 (AMALMIAHGFTSSALFCLANTTY), 128 to 148 (ILPMATTWWLLTNLMNIAVPP), and 156 to 176 (LLIMSALFNWCPTTIIMLGLS).

The protein belongs to the complex I subunit 4 family.

Its subcellular location is the mitochondrion membrane. The enzyme catalyses a ubiquinone + NADH + 5 H(+)(in) = a ubiquinol + NAD(+) + 4 H(+)(out). Its function is as follows. Core subunit of the mitochondrial membrane respiratory chain NADH dehydrogenase (Complex I) that is believed to belong to the minimal assembly required for catalysis. Complex I functions in the transfer of electrons from NADH to the respiratory chain. The immediate electron acceptor for the enzyme is believed to be ubiquinone. This is NADH-ubiquinone oxidoreductase chain 4 (MT-ND4) from Agkistrodon contortrix contortrix (Southern copperhead).